A 213-amino-acid polypeptide reads, in one-letter code: MAMWSLRRKSSRSVQLRVDSPKEQSYDILSAGGEHVALLPKSVRSLARTILTAATISQAAMKAGKPPSSRLWGEIFDRMTVTLNEYDISASPFHPTDPTRKIVGRALRCIERAPLTHEEMDTRFTIMMYWCCLGHAGYCTVSRLYEKNVRLMDIVGSATGCGISPLPEIESYWKPLCRAVATKGNAAIGDDAELAHYLTNLRESPTGDGESYL.

The protein belongs to the herpesviridae US10 family. Phosphorylated.

It localises to the virion tegument. The protein localises to the host nucleus matrix. This chain is Virion protein US10 homolog (US639), found in Gallid herpesvirus 2 (strain GA) (GaHV-2).